A 334-amino-acid chain; its full sequence is Anthranilate phosphoribosyltransferase (334 aa).

Residues Gly79, 82-83 (GD), Ser87, 89-92 (NIST), 107-115 (KHGNRSISS), and Ser119 each bind 5-phospho-alpha-D-ribose 1-diphosphate. Gly79 lines the anthranilate pocket. Ser91 provides a ligand contact to Mg(2+). An anthranilate-binding site is contributed by Asn110. Arg165 is a binding site for anthranilate. Residues Asp224 and Glu225 each contribute to the Mg(2+) site.

The protein belongs to the anthranilate phosphoribosyltransferase family. In terms of assembly, homodimer. The cofactor is Mg(2+).

The enzyme catalyses N-(5-phospho-beta-D-ribosyl)anthranilate + diphosphate = 5-phospho-alpha-D-ribose 1-diphosphate + anthranilate. The protein operates within amino-acid biosynthesis; L-tryptophan biosynthesis; L-tryptophan from chorismate: step 2/5. Catalyzes the transfer of the phosphoribosyl group of 5-phosphorylribose-1-pyrophosphate (PRPP) to anthranilate to yield N-(5'-phosphoribosyl)-anthranilate (PRA). The chain is Anthranilate phosphoribosyltransferase from Streptococcus pneumoniae serotype 19F (strain G54).